A 151-amino-acid chain; its full sequence is MAELASIIRPTKTPGRTSGRSTPGAAHLPPPLSTGLSDLLMLLQSPQKPGSGRARRRTVCRPRRSGPDGDFRPSSRRRTPRTRTSDTSRRRRTPAAPTRRTVCRRRPSSSSNTSSGTATSGESSEADWRDSSSASDDDRIPSSKTTTLKAR.

The segment at 1 to 151 is disordered; that stretch reads MAELASIIRP…SSKTTTLKAR (151 aa). Positions 33 to 45 are enriched in low complexity; sequence STGLSDLLMLLQS. Residues 53–64 show a composition bias toward basic residues; the sequence is RARRRTVCRPRR. Low complexity predominate over residues 108-123; sequence SSSSNTSSGTATSGES. Residues 126–141 are compositionally biased toward basic and acidic residues; the sequence is ADWRDSSSASDDDRIP.

This is an uncharacterized protein from Aotus trivirgatus (Three-striped night monkey).